A 763-amino-acid chain; its full sequence is Ethylene receptor 2 (763 aa).

The next 3 membrane-spanning stretches (helical) occupy residues 58–78 (FLIA…ATCS), 86–106 (IVLQ…ITMF), and 115–135 (VVLA…ATAI). 2 residues coordinate Cu cation: Cys97 and His101. The region spanning 190–339 (DRHTILYTTM…VVADQVAVAL (150 aa)) is the GAF domain. Residues 382–615 (AMYDGMRRPM…TIMLALQFQL (234 aa)) enclose the Histidine kinase domain. The Response regulatory domain maps to 641 to 760 (QVILVDSDDT…ALGDELYRVL (120 aa)). A 4-aspartylphosphate modification is found at Asp692.

The protein belongs to the ethylene receptor family. It depends on Cu cation as a cofactor. Post-translationally, autophosphorylated on serine, threonine and tyrosine residues.

It localises to the endoplasmic reticulum membrane. It catalyses the reaction ATP + protein L-histidine = ADP + protein N-phospho-L-histidine.. Ethylene receptor related to bacterial two-component regulators. Acts as a negative regulator of ethylene signaling. May delay the transition from the vegetative stage to the floral stage by up-regulating GI (GIGANTEA) and RCN1 and cause starch accumulation in stems by down-regulating the alpha-amylase AMY3D. The polypeptide is Ethylene receptor 2 (Oryza sativa subsp. japonica (Rice)).